A 308-amino-acid polypeptide reads, in one-letter code: tRNA uridine(34) hydroxylase (308 aa).

Positions Ala-128–Ser-222 constitute a Rhodanese domain. Cys-182 functions as the Cysteine persulfide intermediate in the catalytic mechanism.

Belongs to the TrhO family.

It carries out the reaction uridine(34) in tRNA + AH2 + O2 = 5-hydroxyuridine(34) in tRNA + A + H2O. Functionally, catalyzes oxygen-dependent 5-hydroxyuridine (ho5U) modification at position 34 in tRNAs. This Brucella suis biovar 1 (strain 1330) protein is tRNA uridine(34) hydroxylase.